The chain runs to 194 residues: MKIKRIEVLINNGSVPGIPMILNEIQDAIKTVSWPEGNNSFVINPVRKGNGVKPIKNSCMRHLHQKGWALEHPVRIKAEMRPGPLDAVKMIGGKAFALEWETGNISSSHRAINKMVMGMLERVIIGGVLILPSRDMYNYLTDRVGNFRELEPYFSVWRQFNLKDAYLAIVEIEHDSVDAQVSLIPKGTDGRAIR.

The Mg(2+) site is built by E71, D86, and W100. E101 (proton acceptor) is an active-site residue.

Homodimer. The cofactor is Mg(2+).

It catalyses the reaction Endonucleolytic cleavage of DNA to give specific double-stranded fragments with terminal 5'-phosphates.. A P subtype restriction enzyme that recognizes the double-stranded sequence 5'-GGATCC-3' and cleaves after G-1. The sequence is that of Type II restriction enzyme OkrAI from Oceanobacter kriegii (Oceanospirillum kriegii).